Here is a 614-residue protein sequence, read N- to C-terminus: Vitamin B12 transporter BtuB (614 aa).

Residues 1–20 form the signal peptide; that stretch reads MIKKASLLTACSVTAFSAWA. The short motif at 26 to 33 is the TonB box element; it reads DTLVVTAN. One can recognise a TBDR plug domain in the interval 38–152; that stretch reads PRSTVLAPTT…IGGVVNIITT (115 aa). Cyanocob(III)alamin-binding positions include leucine 83, serine 85, asparagine 92, and 110-111; that span reads GS. A TBDR beta-barrel domain is found at 155-614; it reads EPGTEISAGW…EYTLSGSYTF (460 aa). 3 beta stranded membrane-spanning segments follow: residues 158 to 165, 169 to 178, and 184 to 195; these read TEISAGWG, YQNYDVSTQQ, and TRVTLLGDYAHT. Residues aspartate 199, glutamine 211, aspartate 213, and aspartate 215 each contribute to the Ca(2+) site. Beta stranded transmembrane passes span 217-227 and 232-248; these read FLSKTLYGALE and DAWS…NRTN. Tyrosine 249 and aspartate 250 together coordinate Ca(2+). Alanine 251 serves as a coordination point for cyanocob(III)alamin. Ca(2+) is bound at residue aspartate 261. The next 14 membrane-spanning stretches (beta stranded) occupy residues 263 to 277, 279 to 296, 309 to 325, 328 to 337, 353 to 369, 371 to 381, 385 to 400, 403 to 417, 434 to 443, 449 to 458, 473 to 490, 494 to 509, 517 to 529, and 535 to 550; these read RKLY…LRYN, ELIK…KDYN, TLDE…NNII, HGNVGAGVDW, YDQR…QQVG, FTFEGAARSDD, FGRH…WEFI, YRFI…KAPN, KSKQWEGAFE, VNWRISGYRN, YYNE…TANF, PLTH…ARNA, RRAK…QLDW, and DWGI…YDKD. Cyanocob(III)alamin is bound at residue threonine 309. Cyanocob(III)alamin is bound at residue arginine 517. Tyrosine 551 is a binding site for cyanocob(III)alamin. A run of 3 beta stranded transmembrane segments spans residues 558–572, 585–596, and 602–614; these read TVKM…LAVA, IANLFDKDYETV, and AGRE…SYTF. A TonB C-terminal box motif is present at residues 597-614; the sequence is YGYQTAGREYTLSGSYTF.

It belongs to the TonB-dependent receptor family. BtuB (TC 1.B.14.3.1) subfamily.

The protein resides in the cell outer membrane. In terms of biological role, involved in the active translocation of vitamin B12 (cyanocobalamin) across the outer membrane to the periplasmic space. It derives its energy for transport by interacting with the trans-periplasmic membrane protein TonB. The chain is Vitamin B12 transporter BtuB from Escherichia coli O157:H7.